The sequence spans 81 residues: Large ribosomal subunit protein bL31B (81 aa).

This sequence belongs to the bacterial ribosomal protein bL31 family. Type B subfamily. Part of the 50S ribosomal subunit.

This Cutibacterium acnes (strain DSM 16379 / KPA171202) (Propionibacterium acnes) protein is Large ribosomal subunit protein bL31B.